The following is a 282-amino-acid chain: Homeobox protein vex1 (282 aa).

The segment at residues 129–188 is a DNA-binding region (homeobox); sequence ASRARTKFTAEQLEELEKSFKENRYIGSSEKRRLSKVLKLSENQIKTWFQNRRMKFKRQT.

It is found in the nucleus. Transcriptional repressor. Acts in a ventral signaling pathway downstream of bmp4 to antagonize the Spemann organizer and ventrally pattern the embryonic mesoderm. Represses transcription of the dorsal genes gsc and otx2. The sequence is that of Homeobox protein vex1 from Xenopus tropicalis (Western clawed frog).